The primary structure comprises 819 residues: MDTEGFGELLQQAEQLAAETEGISELPHVERNLQEIQQAGERLRSRTLTRTSQETADVKASVLLGSRGLDISHISQRLESLSAATTFEPLEPVKDTDIQGFLKNEKDNALLSAIEESRKRTFGMAEEYHRESMLVEWEQVKQRILHTLLASGEDALDFTQESEPSYVSDVSPPGRSSLDSIEMAYARQIYIYNEKIVSGHLQPNLVDLCASVAELDDKSISDMWAMVKQMTDVVLTPATDALKSRSSVEVRMDFVKQALGYLEQSYKNYTLVTVFGNLHQAQLGGVPGTYQLVRSFLNIKLPAPSPGLQDGEVEGHPVWALIYYCMRCGDLLAASQVVSRAQHQLGEFKTWFQEYMNSKDRRLSPATENKLRLHYRRALRNNTDPYKRAVYCIIGRCDITDNQSEVADKTEDYLWLKLNQVCFDDDGTSSPQDRLTLSQFQKQLLEDYGESHFTVNQQPFLYFQVLFLTAQFEAAIAFLFRMERLRCHAVHVALVLFELKLLLKSSGQSAQLLSHEPGDPPCMRRLNFVRLLMLYTRKFESTDPREALQYFYFLRDEKDSQGENMFLRCVSELVIESREFDMILGKLENDGSRKPGVIDKFTSDTKPIINKVASVAENKGLFEEAAKLYDLAKNADKVLELMNKLLSPVVPQISAPQSNKERLKNMALSIAERYRAQGISANKFVDSTFYLLLDLITFFDEYHSGHIDRAFDIIDRLKLVPLNQESMEERVAAFRNFSDEIRHNLSEVLLATMNILFTQFKRLKGTSPSSATRPQRVIEDRDSQLRSQARALITFAGMIPYRTSGDTNARLVQMEVLMN.

A Phosphothreonine modification is found at Thr-49. Phosphoserine occurs at positions 52, 66, 72, 75, 80, 430, and 767.

The protein belongs to the nucleoporin interacting component (NIC) family. In terms of assembly, part of the nuclear pore complex (NPC). Component of the p62 complex, a complex composed of NUP62 and NUP54. Forms a complex with NUP35, NUP155, NUP205 and lamin B; the interaction with NUP35 is direct. Does not interact with TPR. Interacts with SMAD4 and IPO7; translocates SMAD4 to the nucleus through the NPC upon BMP7 stimulation resulting in activation of SMAD4 signaling.

The protein resides in the nucleus membrane. The protein localises to the nucleus. Its subcellular location is the nuclear pore complex. It localises to the nucleus envelope. Its function is as follows. Plays a role in the nuclear pore complex (NPC) assembly and/or maintenance. May anchor nucleoporins, but not NUP153 and TPR, to the NPC. During renal development, regulates podocyte migration and proliferation through SMAD4 signaling. This chain is Nuclear pore complex protein Nup93 (Nup93), found in Rattus norvegicus (Rat).